Here is a 200-residue protein sequence, read N- to C-terminus: Protein GrpE (200 aa).

A disordered region spans residues 15 to 47 (DLEMDLNEEELEESEVNEDKEFEELDKSEEENE). The segment covering 16–47 (LEMDLNEEELEESEVNEDKEFEELDKSEEENE) has biased composition (acidic residues).

This sequence belongs to the GrpE family. In terms of assembly, homodimer.

The protein localises to the cytoplasm. Functionally, participates actively in the response to hyperosmotic and heat shock by preventing the aggregation of stress-denatured proteins, in association with DnaK and GrpE. It is the nucleotide exchange factor for DnaK and may function as a thermosensor. Unfolded proteins bind initially to DnaJ; upon interaction with the DnaJ-bound protein, DnaK hydrolyzes its bound ATP, resulting in the formation of a stable complex. GrpE releases ADP from DnaK; ATP binding to DnaK triggers the release of the substrate protein, thus completing the reaction cycle. Several rounds of ATP-dependent interactions between DnaJ, DnaK and GrpE are required for fully efficient folding. The sequence is that of Protein GrpE from Clostridium tetani (strain Massachusetts / E88).